A 407-amino-acid polypeptide reads, in one-letter code: 1-deoxy-D-xylulose 5-phosphate reductoisomerase (407 aa).

NADPH-binding residues include threonine 25, glycine 26, serine 27, isoleucine 28, asparagine 53, and asparagine 136. Residue lysine 137 coordinates 1-deoxy-D-xylulose 5-phosphate. NADPH is bound at residue glutamate 138. Aspartate 162 serves as a coordination point for Mn(2+). Serine 163, glutamate 164, serine 188, and histidine 211 together coordinate 1-deoxy-D-xylulose 5-phosphate. Mn(2+) is bound at residue glutamate 164. An NADPH-binding site is contributed by glycine 217. 1-deoxy-D-xylulose 5-phosphate contacts are provided by serine 224, asparagine 229, lysine 230, and glutamate 233. A Mn(2+)-binding site is contributed by glutamate 233.

This sequence belongs to the DXR family. Requires Mg(2+) as cofactor. Mn(2+) serves as cofactor.

The enzyme catalyses 2-C-methyl-D-erythritol 4-phosphate + NADP(+) = 1-deoxy-D-xylulose 5-phosphate + NADPH + H(+). It functions in the pathway isoprenoid biosynthesis; isopentenyl diphosphate biosynthesis via DXP pathway; isopentenyl diphosphate from 1-deoxy-D-xylulose 5-phosphate: step 1/6. Its function is as follows. Catalyzes the NADPH-dependent rearrangement and reduction of 1-deoxy-D-xylulose-5-phosphate (DXP) to 2-C-methyl-D-erythritol 4-phosphate (MEP). In Bradyrhizobium sp. (strain BTAi1 / ATCC BAA-1182), this protein is 1-deoxy-D-xylulose 5-phosphate reductoisomerase.